The chain runs to 271 residues: Undecaprenyl-diphosphatase (271 aa).

A run of 8 helical transmembrane segments spans residues 2–22 (LLILKAIILAIVEGLTEFVPV), 42–62 (ANLFNVVIQLGAILAVVVVYW), 80–100 (LRFWINIVVACIPAVIFGFSL), 108–128 (LFNPITVAIGLVIGGILMIIV), 149–168 (SIFVGMFQCLALWPGMSRSA), 175–195 (WIAGLSPVVAAEFSFFLAIPV), 214–234 (IEFIALIVGFVGAFLVSLVVI), and 248–268 (IFAIYRIFIGAILLILAIFKI).

The protein belongs to the UppP family.

The protein localises to the cell membrane. It carries out the reaction di-trans,octa-cis-undecaprenyl diphosphate + H2O = di-trans,octa-cis-undecaprenyl phosphate + phosphate + H(+). Catalyzes the dephosphorylation of undecaprenyl diphosphate (UPP). Confers resistance to bacitracin. This Clostridium tetani (strain Massachusetts / E88) protein is Undecaprenyl-diphosphatase.